A 373-amino-acid polypeptide reads, in one-letter code: Opsin Rh1 (373 aa).

Residues 1 to 49 (MESFAVAAAQLGPHFAPLSNGSVVDKVTPDMAHLISPYWNQFPAMDPIW) lie on the Extracellular side of the membrane. N-linked (GlcNAc...) asparagine glycosylation is present at N20. Residues 50–74 (AKILTAYMIMIGMISWCGNGVVIYI) form a helical membrane-spanning segment. Residues 75–86 (FATTKSLRTPAN) are Cytoplasmic-facing. A helical transmembrane segment spans residues 87-112 (LLVINLAISDFGIMITNTPMMGINLY). Over 113-126 (FETWVLGPMMCDIY) the chain is Extracellular. Cysteines 123 and 200 form a disulfide. A helical membrane pass occupies residues 127–146 (AGLGSAFGCSSIWSMCMISL). The Cytoplasmic segment spans residues 147–165 (DRYQVIVKGMAGRPMTIPL). Residues 166–189 (ALGKIAYIWFMSSIWCLAPAFGWS) form a helical membrane-spanning segment. The Extracellular portion of the chain corresponds to 190 to 213 (RYVPEGNLTSCGIDYLERDWNPRS). N196 is a glycosylation site (N-linked (GlcNAc...) asparagine). The chain crosses the membrane as a helical span at residues 214 to 241 (YLIFYSIFVYYIPLFLICYSYWFIIAAV). At 242 to 276 (SAHEKAMREQAKKMNVKSLRSSEDAEKSAEGKLAK) the chain is on the cytoplasmic side. The chain crosses the membrane as a helical span at residues 277–300 (VALVTITLWFMAWTPYLVINCMGL). Over 301–307 (FKFEGLT) the chain is Extracellular. A helical membrane pass occupies residues 308 to 332 (PLNTIWGACFAKSAACYNPIVYGIS). At K319 the chain carries N6-(retinylidene)lysine. Residues 333-373 (HPKYRLALKEKCPCCVFGKVDDGKSSDAQSQATASEAESKA) are Cytoplasmic-facing. Residues 354–373 (DGKSSDAQSQATASEAESKA) are disordered. Over residues 358–373 (SDAQSQATASEAESKA) the composition is skewed to low complexity.

Belongs to the G-protein coupled receptor 1 family. Opsin subfamily. In terms of processing, phosphorylated on some or all of the serine and threonine residues present in the C-terminal region.

The protein resides in the cell projection. It localises to the rhabdomere membrane. In terms of biological role, visual pigments are the light-absorbing molecules that mediate vision. They consist of an apoprotein, opsin, covalently linked to cis-retinal. The protein is Opsin Rh1 (ninaE) of Drosophila melanogaster (Fruit fly).